The sequence spans 434 residues: Nuclear distribution protein PAC1 (434 aa).

Residues 8–40 (QKDDLHKAMLDYLYANNHTAAFNALKESAGITY) enclose the LisH domain. Positions 57–83 (TSVIRLQKKIMELENRNAALQEELSMS) form a coiled coil. WD repeat units follow at residues 106-147 (GHRA…RTLK), 149-187 (HTKP…KNTK), 191-230 (GHDH…QVRT), 233-272 (GHSE…PKSE), 275-334 (GHEN…MIRN), 337-378 (GHDN…RIVE), and 401-434 (KKVN…IWLP).

The protein belongs to the WD repeat LIS1/nudF family. As to quaternary structure, self-associates. Interacts with NDL1 and dynein.

Its subcellular location is the cytoplasm. It localises to the cytoskeleton. The protein resides in the spindle pole. In terms of biological role, positively regulates the activity of the minus-end directed microtubule motor protein dynein. May enhance dynein-mediated microtubule sliding by targeting dynein to the microtubule plus end. Required for nuclear migration during vegetative growth as well as development. Required for retrograde early endosome (EE) transport from the hyphal tip. Required for localization of dynein to the mitotic spindle poles. Recruits additional proteins to the dynein complex at SPBs. The polypeptide is Nuclear distribution protein PAC1 (Coprinopsis cinerea (strain Okayama-7 / 130 / ATCC MYA-4618 / FGSC 9003) (Inky cap fungus)).